The chain runs to 290 residues: Nucleotide-binding protein XfasM23_0667 (290 aa).

13–20 (GLSGSGKS) is a binding site for ATP. 65 to 68 (DIRS) serves as a coordination point for GTP.

The protein belongs to the RapZ-like family.

Displays ATPase and GTPase activities. This is Nucleotide-binding protein XfasM23_0667 from Xylella fastidiosa (strain M23).